The sequence spans 563 residues: Minor fimbrium subunit Mfa1 (563 aa).

Positions 1–19 (MKLNKMFLVGALLSLGFAS) are cleaved as a signal peptide. Residue Cys-20 is the site of N-palmitoyl cysteine attachment. Cys-20 is lipidated: S-diacylglycerol cysteine. The propeptide occupies 20 to 49 (CSKEGNGPDPDNAAKSYMSMTLSMPMGSAR). The disordered stretch occupies residues 504 to 543 (LVPDPDPSNPENPNNPDPNPDEPGTPVPTDPENPLPDQDT). Positions 505–537 (VPDPDPSNPENPNNPDPNPDEPGTPVPTDPENP) are enriched in pro residues.

It belongs to the bacteroidetes fimbrillin superfamily. Structural component of the fimbrial stalk. Minor fimbriae are composed of a structural subunit, most often Mfa1, and the accessory subunits Mfa3, Mfa4 and Mfa5. Mfa1 interacts with Mfa2; this anchors the fimbrium in the membrane. Fimbrium assembly occurs by linear, head-to-tail oligomerization of fimbrial subunits. This is mediated via insertion of a C-terminal beta-strand from one subunit into a groove in the N-terminal domain of the following subunit. Interacts with S.gordonii ssp5.

It localises to the fimbrium. The protein resides in the cell outer membrane. Structural subunit of the minor fimbriae. These filamentous pili are attached to the cell surface; they mediate biofilm formation, adhesion onto host cells and onto other bacteria that are part of the oral microbiome. They play an important role in invasion of periodontal tissues and are recognized as major virulence factors. Mfa1 orthologs from different strains have highly divergent sequences, and this correlates with pathogenicity. In Porphyromonas gingivalis (strain ATCC 33277 / DSM 20709 / CIP 103683 / JCM 12257 / NCTC 11834 / 2561), this protein is Minor fimbrium subunit Mfa1.